The sequence spans 445 residues: Ribosomal protein uS12 methylthiotransferase RimO (445 aa).

Residues Tyr-4 to Asn-119 form the MTTase N-terminal domain. Positions 13, 48, 82, 157, 161, and 164 each coordinate [4Fe-4S] cluster. The region spanning Thr-143 to Glu-373 is the Radical SAM core domain. Positions Lys-376–Asn-441 constitute a TRAM domain.

This sequence belongs to the methylthiotransferase family. RimO subfamily. Requires [4Fe-4S] cluster as cofactor.

Its subcellular location is the cytoplasm. It carries out the reaction L-aspartate(89)-[ribosomal protein uS12]-hydrogen + (sulfur carrier)-SH + AH2 + 2 S-adenosyl-L-methionine = 3-methylsulfanyl-L-aspartate(89)-[ribosomal protein uS12]-hydrogen + (sulfur carrier)-H + 5'-deoxyadenosine + L-methionine + A + S-adenosyl-L-homocysteine + 2 H(+). Catalyzes the methylthiolation of an aspartic acid residue of ribosomal protein uS12. The polypeptide is Ribosomal protein uS12 methylthiotransferase RimO (Clostridium perfringens (strain SM101 / Type A)).